A 331-amino-acid polypeptide reads, in one-letter code: Ornithine carbamoyltransferase (331 aa).

Carbamoyl phosphate-binding positions include 55-58 (STRT), Q82, R106, and 133-136 (HPTQ). L-ornithine contacts are provided by residues N166, D230, and 234-235 (SM). Residues 272-273 (CL) and R317 contribute to the carbamoyl phosphate site.

This sequence belongs to the aspartate/ornithine carbamoyltransferase superfamily. OTCase family.

It localises to the cytoplasm. It carries out the reaction carbamoyl phosphate + L-ornithine = L-citrulline + phosphate + H(+). The protein operates within amino-acid biosynthesis; L-arginine biosynthesis; L-arginine from L-ornithine and carbamoyl phosphate: step 1/3. Functionally, reversibly catalyzes the transfer of the carbamoyl group from carbamoyl phosphate (CP) to the N(epsilon) atom of ornithine (ORN) to produce L-citrulline. The protein is Ornithine carbamoyltransferase of Neisseria gonorrhoeae (strain ATCC 700825 / FA 1090).